The primary structure comprises 202 residues: Small ribosomal subunit protein uS4 (202 aa).

The span at 1-13 shows a compositional bias: basic residues; the sequence is MSRYRGPRLRVTR. Positions 1–42 are disordered; that stretch reads MSRYRGPRLRVTRRLGELPGLTRKASKKSNPPGQHGQARRKR. One can recognise an S4 RNA-binding domain in the interval 90 to 152; the sequence is NRLDNVCFRL…KASKKLVEGN (63 aa).

It belongs to the universal ribosomal protein uS4 family. As to quaternary structure, part of the 30S ribosomal subunit. Contacts protein S5. The interaction surface between S4 and S5 is involved in control of translational fidelity.

In terms of biological role, one of the primary rRNA binding proteins, it binds directly to 16S rRNA where it nucleates assembly of the body of the 30S subunit. Its function is as follows. With S5 and S12 plays an important role in translational accuracy. The polypeptide is Small ribosomal subunit protein uS4 (Prochlorococcus marinus subsp. pastoris (strain CCMP1986 / NIES-2087 / MED4)).